We begin with the raw amino-acid sequence, 280 residues long: Lysosome-associated membrane glycoprotein 5 (280 aa).

A signal peptide spans 1 to 29 (MDLQGRGVPSIDRLRVLLMLFHTMAQIMA). At 30–235 (EQEVENLSGL…PVDEREQLEE (206 aa)) the chain is on the extracellular side. N35, N53, and N127 each carry an N-linked (GlcNAc...) asparagine glycan. Residues 236-256 (TLPLILGLILGLVIMVTLAIY) form a helical membrane-spanning segment. Residues 257 to 280 (HVHHKMTANQVQIPRDRSQYKHMG) are Cytoplasmic-facing.

Belongs to the LAMP family. Glycosylated. As to expression, expressed in plasmocytoid dendritic cells. Expressed in suprabasal skin keratinocytes and squamous cells (at protein level). Expressed in the brain and weakly in spleen and skin. Expressed in plasmocytoid dendritic cells.

The protein localises to the cell membrane. It localises to the cytoplasmic vesicle. The protein resides in the secretory vesicle. It is found in the synaptic vesicle membrane. Its subcellular location is the endoplasmic reticulum-Golgi intermediate compartment membrane. The protein localises to the endosome membrane. It localises to the cytoplasmic vesicle membrane. The protein resides in the cell projection. It is found in the dendrite. Its subcellular location is the growth cone membrane. The protein localises to the early endosome membrane. It localises to the recycling endosome. In terms of biological role, plays a role in short-term synaptic plasticity in a subset of GABAergic neurons in the brain. This chain is Lysosome-associated membrane glycoprotein 5 (LAMP5), found in Homo sapiens (Human).